A 202-amino-acid polypeptide reads, in one-letter code: Holliday junction resolvase RecU (202 aa).

Residues threonine 85, aspartate 87, glutamate 100, and glutamine 119 each coordinate Mg(2+).

This sequence belongs to the RecU family. It depends on Mg(2+) as a cofactor.

It localises to the cytoplasm. It carries out the reaction Endonucleolytic cleavage at a junction such as a reciprocal single-stranded crossover between two homologous DNA duplexes (Holliday junction).. In terms of biological role, endonuclease that resolves Holliday junction intermediates in genetic recombination. Cleaves mobile four-strand junctions by introducing symmetrical nicks in paired strands. Promotes annealing of linear ssDNA with homologous dsDNA. Required for DNA repair, homologous recombination and chromosome segregation. This Streptococcus equi subsp. zooepidemicus (strain H70) protein is Holliday junction resolvase RecU.